A 332-amino-acid chain; its full sequence is Glycerol-3-phosphate dehydrogenase [NAD(P)+] (332 aa).

NADPH contacts are provided by S11, F12, R32, and K106. 3 residues coordinate sn-glycerol 3-phosphate: K106, G134, and S136. A138 lines the NADPH pocket. Residues K189, D242, S252, R253, and N254 each coordinate sn-glycerol 3-phosphate. K189 serves as the catalytic Proton acceptor. Residue R253 participates in NADPH binding. NADPH-binding residues include V277 and E279.

Belongs to the NAD-dependent glycerol-3-phosphate dehydrogenase family.

It is found in the cytoplasm. It carries out the reaction sn-glycerol 3-phosphate + NAD(+) = dihydroxyacetone phosphate + NADH + H(+). It catalyses the reaction sn-glycerol 3-phosphate + NADP(+) = dihydroxyacetone phosphate + NADPH + H(+). The protein operates within membrane lipid metabolism; glycerophospholipid metabolism. Functionally, catalyzes the reduction of the glycolytic intermediate dihydroxyacetone phosphate (DHAP) to sn-glycerol 3-phosphate (G3P), the key precursor for phospholipid synthesis. The sequence is that of Glycerol-3-phosphate dehydrogenase [NAD(P)+] from Clostridium acetobutylicum (strain ATCC 824 / DSM 792 / JCM 1419 / IAM 19013 / LMG 5710 / NBRC 13948 / NRRL B-527 / VKM B-1787 / 2291 / W).